We begin with the raw amino-acid sequence, 217 residues long: Carbon disulfide hydrolase (217 aa).

Zn(2+) contacts are provided by Cys-39, His-98, and Cys-101. The tract at residues Asp-192–Lys-217 is disordered.

It belongs to the beta-class carbonic anhydrase family. As to quaternary structure, forms only homooctamers in solution. Zn(2+) is required as a cofactor.

The enzyme catalyses carbon disulfide + 2 H2O = 2 hydrogen sulfide + CO2 + 2 H(+). It participates in sulfur metabolism; hydrogen sulfide biosynthesis. In terms of biological role, catalyzes the conversion of carbon disulfide into hydrogen sulfide and carbon dioxide, with carbonyl sulfide as an intermediate. Likely plays a key role in sulfur metabolism that allows A.thiooxidans S1p to grow on carbon disulfide as the main carbon and energy source. Does not show carbonic anhydrase activity (hydration of CO(2) to carbonate). The chain is Carbon disulfide hydrolase from Acidithiobacillus thiooxidans (Thiobacillus thiooxidans).